A 552-amino-acid polypeptide reads, in one-letter code: TBCC domain-containing protein 1 (552 aa).

A C-CAP/cofactor C-like domain is found at 304–435 (PRLHRIVVMS…LEDHMARTGL (132 aa)).

It belongs to the TBCC family. In terms of tissue distribution, expressed in brain and testis (at protein level).

Its subcellular location is the cytoplasm. It localises to the cytoskeleton. The protein localises to the microtubule organizing center. It is found in the centrosome. The protein resides in the spindle pole. In terms of biological role, plays a role in the regulation of centrosome and Golgi apparatus positioning, with consequences on cell shape and cell migration. In Mus musculus (Mouse), this protein is TBCC domain-containing protein 1 (Tbccd1).